The chain runs to 177 residues: Large ribosomal subunit protein uL6 (177 aa).

The protein belongs to the universal ribosomal protein uL6 family. As to quaternary structure, part of the 50S ribosomal subunit.

This protein binds to the 23S rRNA, and is important in its secondary structure. It is located near the subunit interface in the base of the L7/L12 stalk, and near the tRNA binding site of the peptidyltransferase center. This is Large ribosomal subunit protein uL6 from Psychromonas ingrahamii (strain DSM 17664 / CCUG 51855 / 37).